A 715-amino-acid polypeptide reads, in one-letter code: Fatty acid oxidation complex subunit alpha (715 aa).

Positions 1–190 are enoyl-CoA hydratase/isomerase; the sequence is MIYEGKAITV…KVGAVDAVVA (190 aa). Asp297 lines the substrate pocket. A 3-hydroxyacyl-CoA dehydrogenase region spans residues 312-715; sequence KDVKQAAVLG…MAKNGQSFFG (404 aa). NAD(+) is bound by residues Met325, Asp344, 401-403, Lys408, and Ser430; that span reads VVE. His451 (for 3-hydroxyacyl-CoA dehydrogenase activity) is an active-site residue. Asn454 serves as a coordination point for NAD(+). Substrate contacts are provided by Asn501 and Tyr660.

The protein in the N-terminal section; belongs to the enoyl-CoA hydratase/isomerase family. In the C-terminal section; belongs to the 3-hydroxyacyl-CoA dehydrogenase family. In terms of assembly, heterotetramer of two alpha chains (FadB) and two beta chains (FadA).

It carries out the reaction a (3S)-3-hydroxyacyl-CoA + NAD(+) = a 3-oxoacyl-CoA + NADH + H(+). The catalysed reaction is a (3S)-3-hydroxyacyl-CoA = a (2E)-enoyl-CoA + H2O. The enzyme catalyses a 4-saturated-(3S)-3-hydroxyacyl-CoA = a (3E)-enoyl-CoA + H2O. It catalyses the reaction (3S)-3-hydroxybutanoyl-CoA = (3R)-3-hydroxybutanoyl-CoA. It carries out the reaction a (3Z)-enoyl-CoA = a 4-saturated (2E)-enoyl-CoA. The catalysed reaction is a (3E)-enoyl-CoA = a 4-saturated (2E)-enoyl-CoA. It functions in the pathway lipid metabolism; fatty acid beta-oxidation. Involved in the aerobic and anaerobic degradation of long-chain fatty acids via beta-oxidation cycle. Catalyzes the formation of 3-oxoacyl-CoA from enoyl-CoA via L-3-hydroxyacyl-CoA. It can also use D-3-hydroxyacyl-CoA and cis-3-enoyl-CoA as substrate. This chain is Fatty acid oxidation complex subunit alpha, found in Pseudomonas fluorescens (strain ATCC BAA-477 / NRRL B-23932 / Pf-5).